The sequence spans 199 residues: Protein GrpE (199 aa).

The tract at residues 20 to 52 (YKVENEILEEETDEESQHQEPALGHPSYTALEE) is disordered.

The protein belongs to the GrpE family. In terms of assembly, homodimer.

It localises to the cytoplasm. In terms of biological role, participates actively in the response to hyperosmotic and heat shock by preventing the aggregation of stress-denatured proteins, in association with DnaK and GrpE. It is the nucleotide exchange factor for DnaK and may function as a thermosensor. Unfolded proteins bind initially to DnaJ; upon interaction with the DnaJ-bound protein, DnaK hydrolyzes its bound ATP, resulting in the formation of a stable complex. GrpE releases ADP from DnaK; ATP binding to DnaK triggers the release of the substrate protein, thus completing the reaction cycle. Several rounds of ATP-dependent interactions between DnaJ, DnaK and GrpE are required for fully efficient folding. This Legionella pneumophila (strain Corby) protein is Protein GrpE.